The following is a 532-amino-acid chain: Probable galacturonosyltransferase 14 (532 aa).

Topologically, residues 1–40 (MQLHISPSMRSITISSSNEFIDLMKIKVAARHISYRTLFH) are cytoplasmic. A helical; Signal-anchor for type II membrane protein transmembrane segment spans residues 41-61 (TILILAFLLPFVFILTAVVTL). Residues 62–532 (EGVNKCSSID…DFIKNCHILE (471 aa)) lie on the Lumenal side of the membrane. N-linked (GlcNAc...) asparagine glycosylation is found at Asn-305, Asn-395, Asn-444, and Asn-519.

The protein belongs to the glycosyltransferase 8 family. In terms of tissue distribution, expressed in roots, inflorescences, siliques, leaves and stems. Accumulates in pollen grains.

It localises to the golgi apparatus membrane. The protein operates within glycan metabolism; pectin biosynthesis. Functionally, may be involved in pectin and/or xylans biosynthesis in cell walls. Together with GAUT13, required for pollen tube growth, possibly through the regulation of pectin biosynthesis and repartition in the pollen tube wall. The polypeptide is Probable galacturonosyltransferase 14 (Arabidopsis thaliana (Mouse-ear cress)).